Here is a 113-residue protein sequence, read N- to C-terminus: uncharacterized protein (113 aa).

The CHY-type; degenerate zinc-finger motif lies at 16-96 (LVDNETRCFH…STVHCKYCNH (81 aa)). Positions 23, 25, 46, 49, 73, 76, 91, and 94 each coordinate Zn(2+).

The protein localises to the cytoplasm. It localises to the nucleus. This is an uncharacterized protein from Schizosaccharomyces pombe (strain 972 / ATCC 24843) (Fission yeast).